A 44-amino-acid chain; its full sequence is Photosystem I reaction center subunit IX (44 aa).

A helical transmembrane segment spans residues 7–27 (YLSVAPVLTTLWFGSLAGLLI).

This sequence belongs to the PsaJ family.

The protein resides in the plastid. Its subcellular location is the chloroplast thylakoid membrane. Its function is as follows. May help in the organization of the PsaE and PsaF subunits. The protein is Photosystem I reaction center subunit IX of Drimys granadensis.